Consider the following 326-residue polypeptide: tRNA-cytidine(32) 2-sulfurtransferase (326 aa).

The PP-loop motif signature appears at 63 to 68 (SGGKDS). [4Fe-4S] cluster-binding residues include cysteine 138, cysteine 141, and cysteine 229.

Belongs to the TtcA family. In terms of assembly, homodimer. The cofactor is Mg(2+). [4Fe-4S] cluster serves as cofactor.

It localises to the cytoplasm. The catalysed reaction is cytidine(32) in tRNA + S-sulfanyl-L-cysteinyl-[cysteine desulfurase] + AH2 + ATP = 2-thiocytidine(32) in tRNA + L-cysteinyl-[cysteine desulfurase] + A + AMP + diphosphate + H(+). It participates in tRNA modification. Its function is as follows. Catalyzes the ATP-dependent 2-thiolation of cytidine in position 32 of tRNA, to form 2-thiocytidine (s(2)C32). The sulfur atoms are provided by the cysteine/cysteine desulfurase (IscS) system. In Leptothrix cholodnii (strain ATCC 51168 / LMG 8142 / SP-6) (Leptothrix discophora (strain SP-6)), this protein is tRNA-cytidine(32) 2-sulfurtransferase.